Here is a 710-residue protein sequence, read N- to C-terminus: Polyribonucleotide nucleotidyltransferase (710 aa).

Mg(2+) is bound by residues Asp489 and Asp495. Residues Pro556–Ile615 form the KH domain. Positions Gly625 to Lys693 constitute an S1 motif domain. A disordered region spans residues Ser691–Asp710. Over residues Pro700–Asp710 the composition is skewed to basic and acidic residues.

This sequence belongs to the polyribonucleotide nucleotidyltransferase family. Requires Mg(2+) as cofactor.

The protein localises to the cytoplasm. The enzyme catalyses RNA(n+1) + phosphate = RNA(n) + a ribonucleoside 5'-diphosphate. Involved in mRNA degradation. Catalyzes the phosphorolysis of single-stranded polyribonucleotides processively in the 3'- to 5'-direction. The protein is Polyribonucleotide nucleotidyltransferase of Streptococcus pyogenes serotype M2 (strain MGAS10270).